The chain runs to 83 residues: Small ribosomal subunit protein bS16 (83 aa).

The protein belongs to the bacterial ribosomal protein bS16 family.

The polypeptide is Small ribosomal subunit protein bS16 (Borrelia hermsii (strain HS1 / DAH)).